The primary structure comprises 72 residues: QIYDTSCKGVYDRGLFSDLEHVCDDCYNLYRNSYVASACRSNCYSNVVFRQCMEELLLMDEFDKYARAVQIV.

Q1 carries the post-translational modification Pyrrolidone carboxylic acid; partial. Intrachain disulfides connect C7/C43, C23/C39, and C26/C52. Valine amide is present on V72.

This sequence belongs to the arthropod CHH/MIH/GIH/VIH hormone family. The N-terminus forms pyrrolidone carboxylic acid in isoform CHH-II and is free in isoform CHH-I. In terms of tissue distribution, produced by the medulla terminalis X-organ in the eyestalks and transported to the sinus gland where they are stored and released.

Its subcellular location is the secreted. Hormone found in the sinus gland of isopods and decapods which controls the blood sugar level. Has a secretagogue action over the amylase released from the midgut gland. May act as a stress hormone and may be involved in the control of molting and reproduction. This is Crustacean hyperglycemic hormone from Cancer pagurus (Rock crab).